Consider the following 216-residue polypeptide: Transmembrane protein 186 (216 aa).

Residues 1–68 (MAFLLRAVPR…IYRFNAIRAL (68 aa)) are Mitochondrial matrix-facing. The helical transmembrane segment at 69-91 (GFLSRLKLAQTAVTVVALPPGFY) threads the bilayer. Residues 92–103 (CYSQGLMTLSSL) are Mitochondrial intermembrane-facing. A helical transmembrane segment spans residues 104 to 124 (GLMSGIASFALVMLCWMSHFF). At 125 to 216 (RRLVGILYVN…GTLATLKNSK (92 aa)) the chain is on the mitochondrial matrix side.

It belongs to the TMEM186 family. As to quaternary structure, part of the mitochondrial complex I assembly/MCIA complex that comprises at least the core subunits TMEM126B, NDUFAF1, ECSIT and ACAD9 and complement subunits such as COA1 and TMEM186. Interacts with MT-ND3.

It localises to the mitochondrion inner membrane. In terms of biological role, as part of the MCIA complex, required for efficient assembly of the mitochondrial complex I. This is Transmembrane protein 186 from Rattus norvegicus (Rat).